Consider the following 278-residue polypeptide: tRNA(Phe) (4-demethylwyosine(37)-C(7)) aminocarboxypropyltransferase (278 aa).

S-adenosyl-L-methionine contacts are provided by residues serine 109, arginine 116, glutamate 155, and aspartate 183–asparagine 184.

The protein belongs to the class I-like SAM-binding methyltransferase superfamily. TRM5/TYW2 family.

Its subcellular location is the cytoplasm. The catalysed reaction is 4-demethylwyosine(37) in tRNA(Phe) + S-adenosyl-L-methionine = 4-demethyl-7-[(3S)-3-amino-3-carboxypropyl]wyosine(37) in tRNA(Phe) + S-methyl-5'-thioadenosine + H(+). Its function is as follows. S-adenosyl-L-methionine-dependent transferase that acts as a component of the wyosine derivatives biosynthesis pathway. Catalyzes the transfer of the alpha-amino-alpha-carboxypropyl (acp) group from S-adenosyl-L-methionine to 4-demethylwyosine (imG-14), forming 7-aminocarboxypropyl-demethylwyosine (wybutosine-86) at position 37 of tRNA(Phe). This chain is tRNA(Phe) (4-demethylwyosine(37)-C(7)) aminocarboxypropyltransferase, found in Pyrococcus horikoshii (strain ATCC 700860 / DSM 12428 / JCM 9974 / NBRC 100139 / OT-3).